The following is a 617-amino-acid chain: Isopropyl malate synthase gloH (617 aa).

Residues Pro47–Leu325 enclose the Pyruvate carboxyltransferase domain.

The protein belongs to the alpha-IPM synthase/homocitrate synthase family. LeuA type 2 subfamily.

The catalysed reaction is 3-methyl-2-oxobutanoate + acetyl-CoA + H2O = (2S)-2-isopropylmalate + CoA + H(+). Its pathway is mycotoxin biosynthesis. Its function is as follows. 2-isopropylmalate synthase; part of the gene cluster that mediates the biosynthesis of pneumocandins, lipohexapeptides of the echinocandin family that prevent fungal cell wall formation by non-competitive inhibition of beta-1,3-glucan synthase. The 10,12-dimethylmyristoyl side chain is synthesized by the reducing polyketide synthase gloL/GLPKS4. The thioesterase gloN/GLHYD exclusively interacts with gloL/GLPKS4 to maintain turnover of the polyketide side chain. The 10R,12S-dimethylmyristic acid is then transferred to the first thiolation domain of the nonribosomal peptide synthetase gloA/GLNRPS4 by the acyl-AMP ligase gloD/GLligase, followed by its acylation to L-ornithine to trigger elongation of the cyclic hexapeptide. L-ornithine, 4R-hydroxyl-L-proline (generated from L-proline by the dioxygenase gloF/GLOXY2), 3S-hydroxyl-L-homotyrosine (generated by gloG/GLHtyB, gloH/GLHtyA, gloI/GLHtyC, gloJ/GLHtyD and hydroxylated at C-3 by the dioxygenase gloM/GLOXY1), 3R-hydroxyl-L-glutamine (generated from L-glutamine probably by the dioxygenase gloE/GLOXY3) and 3S-hydroxyl-L-proline (generated from L-proline by the dioxygenase gloF/GLOXY2 to yield pneumocandin B0), or 3S-hydroxyl-4S-methyl-L-proline (generated from L-leucine by the dioxygenase gloC/GLOXY4 to yield pneumocandin A0) are sequentially added to the growing chain. The last C domain of gloA/GLNRPS4 is proposed to be responsible for cyclization by condensation to form the peptide bond between L-ornithine and 3S-hydroxyl-4S-methyl-L-proline (for pneumocandin A0) or 3S-hydroxyl-L-proline (for pneumocandin B0). Finally, the subsequent C-4 hydroxylation of 3S-hydroxyl-L-homotyrosine and L-ornithine dihydroxylation at C-4 and C-5 are performed by the cytochrome P450 monooxygenases gloP/GLP450-1 and gloO/GLP450-2, respectively. This Glarea lozoyensis (strain ATCC 20868 / MF5171) protein is Isopropyl malate synthase gloH.